We begin with the raw amino-acid sequence, 410 residues long: Dual-specificity RNA methyltransferase RlmN (410 aa).

The interval 7 to 26 (VSSENLDGQQQSSSTPASPA) is disordered. Positions 15–26 (QQQSSSTPASPA) are enriched in low complexity. Residue E120 is the Proton acceptor of the active site. The Radical SAM core domain occupies 130–373 (TGSRKTLCIS…CTIRQTRGDD (244 aa)). A disulfide bridge links C137 with C378. Residues C144, C148, and C151 each coordinate [4Fe-4S] cluster. S-adenosyl-L-methionine is bound by residues 200 to 201 (GE), S232, 254 to 256 (SLH), and N335. C378 serves as the catalytic S-methylcysteine intermediate.

This sequence belongs to the radical SAM superfamily. RlmN family. The cofactor is [4Fe-4S] cluster.

The protein resides in the cytoplasm. The enzyme catalyses adenosine(2503) in 23S rRNA + 2 reduced [2Fe-2S]-[ferredoxin] + 2 S-adenosyl-L-methionine = 2-methyladenosine(2503) in 23S rRNA + 5'-deoxyadenosine + L-methionine + 2 oxidized [2Fe-2S]-[ferredoxin] + S-adenosyl-L-homocysteine. The catalysed reaction is adenosine(37) in tRNA + 2 reduced [2Fe-2S]-[ferredoxin] + 2 S-adenosyl-L-methionine = 2-methyladenosine(37) in tRNA + 5'-deoxyadenosine + L-methionine + 2 oxidized [2Fe-2S]-[ferredoxin] + S-adenosyl-L-homocysteine. Functionally, specifically methylates position 2 of adenine 2503 in 23S rRNA and position 2 of adenine 37 in tRNAs. m2A2503 modification seems to play a crucial role in the proofreading step occurring at the peptidyl transferase center and thus would serve to optimize ribosomal fidelity. The chain is Dual-specificity RNA methyltransferase RlmN from Acinetobacter baumannii (strain AB307-0294).